The primary structure comprises 274 residues: Large ribosomal subunit protein uL2c (274 aa).

The disordered stretch occupies residues 224–274; sequence NPVDHPHGGGEGRAPIGRKKPTTPWGYPALGRKSRKRNKYSEKFILRHRSK.

This sequence belongs to the universal ribosomal protein uL2 family. As to quaternary structure, part of the 50S ribosomal subunit.

Its subcellular location is the plastid. It is found in the chloroplast. This Ipomoea purpurea (Common morning glory) protein is Large ribosomal subunit protein uL2c (rpl2).